The chain runs to 224 residues: 2-C-methyl-D-erythritol 4-phosphate cytidylyltransferase (224 aa).

This sequence belongs to the IspD/TarI cytidylyltransferase family. IspD subfamily.

It carries out the reaction 2-C-methyl-D-erythritol 4-phosphate + CTP + H(+) = 4-CDP-2-C-methyl-D-erythritol + diphosphate. The protein operates within isoprenoid biosynthesis; isopentenyl diphosphate biosynthesis via DXP pathway; isopentenyl diphosphate from 1-deoxy-D-xylulose 5-phosphate: step 2/6. In terms of biological role, catalyzes the formation of 4-diphosphocytidyl-2-C-methyl-D-erythritol from CTP and 2-C-methyl-D-erythritol 4-phosphate (MEP). This is 2-C-methyl-D-erythritol 4-phosphate cytidylyltransferase from Saccharopolyspora erythraea (strain ATCC 11635 / DSM 40517 / JCM 4748 / NBRC 13426 / NCIMB 8594 / NRRL 2338).